A 341-amino-acid chain; its full sequence is Phenylalanine--tRNA ligase alpha subunit (341 aa).

Glu-256 provides a ligand contact to Mg(2+).

It belongs to the class-II aminoacyl-tRNA synthetase family. Phe-tRNA synthetase alpha subunit type 1 subfamily. Tetramer of two alpha and two beta subunits. Mg(2+) serves as cofactor.

The protein resides in the cytoplasm. The enzyme catalyses tRNA(Phe) + L-phenylalanine + ATP = L-phenylalanyl-tRNA(Phe) + AMP + diphosphate + H(+). The chain is Phenylalanine--tRNA ligase alpha subunit from Leptospira interrogans serogroup Icterohaemorrhagiae serovar Lai (strain 56601).